Consider the following 1228-residue polypeptide: MDQDKVAFLLELEDKLAKIRSQVNSKLENQKHIAIILTAVEENIAGQATNDVSKNIVNYIISFMSLLDQAVDPSTHEIKDIQLASSSTYLLDLIFHYSPKVLLRSKFSEILTKIAPCITAEKANAPLIRAAIGCLESLLIAQDAQAWNNTYDLNVTPKRGLQGILELSLDVRPKVRKRALDAVHAVLLNPPVAPTAEHVAAVFVADFCDKQLAGILNDLSNLSNKQLKAQKTKEDINASVMRSLRLITSVVSTGQWPSSQIEPLCDVLLGVTKSSEQYLVSASFECFESMFKTMAETTISSGLAENKYLRVLDTIFALKPSNVDTLLTKSWIAVVIKGMSTYATHQPLKALRKIPGVFHIMCTYLASETPEVYQAASQCLISILSESVKDDLLLYTPSVDEKVFKNVDEIISQIAKTFIDFLSIRYSHCSREILKILVAAFNKFRYRSNPHFLKSLKIVDTWRVNEEQFMDLRNEIELVIGASISAMGPEMILAEAPLNLDNPSSERPGRAWLLPLIRDYTKNANLATFQNELAPYIKSFQSKFDKVPEESIQLRVFQTIVDQIWSTLPRFCELPMDLRESFTDEFASELSSLLYSEVELRTTICHALKVLAESNVSYAEESSSHNVLLLQRFPISEAQKNIEYLSTKSTNLLAVLFNVYTQTTPNARSYILETIDQYLKITSKEDLEKTFNNVCGLLKNSMNEESSGNVNKEKKKPQLTATLLDLIICMITYLPVSSYSALFSMFSLTVNSADALIQKRAYRIITKLSELKSGSTAVAQFISDIENVMVDSASSVQTSAKAARLTAIKTIVELLPLDHLDFIVRTVAEVILSTKDVNEKSRETAFDTLICMGRKMNEPNGIIKLFQIPGYDPTTPDQSSSISEFFKIISAGLIGESQHMVSSSITGYACLVFEFKNELDSGILMDIYDTIELYLTSNSREIVKSAIGFTKVCVLGLPEELMRPKVPELLLKLLRWSHEHTGHFKAKVKHIIERLIRRFGYDYIEANFPEEDRRLLTNIRKMRNRNKRKDEEVTTGVSDVAATKGSRFMSAFDEAVYGSDEENDNGSDQEENVAGGKMKNGAKQFIVESGDNPLDLLDSQTLAHISSTRPKKFNKNQNRARFNDDAFNFDSEGKLVVKGQPKPSTNVDDPLSAVTSGINAYLEAVKSGPVRGQRNKLKFRKNGKDSDEFGDDDDGEKDSRLMRGRVNQGNKIGKHNKKGPKFKSRKKL.

Residues serine 1059 and serine 1067 each carry the phosphoserine modification. The disordered stretch occupies residues 1168-1228 (GPVRGQRNKL…GPKFKSRKKL (61 aa)). Basic residues predominate over residues 1212–1228 (IGKHNKKGPKFKSRKKL).

This sequence belongs to the RRP12 family. Interacts with GSP1.

It is found in the cytoplasm. Its subcellular location is the nucleus. It localises to the nucleolus. In association with GSP1, required for nuclear export of both pre-40S and pre-60S ribosomal subunits. Required for the late maturation of the 18S and 5.8S rRNA of the pre-40S ribosomes and for maturation of the 25S and 5.8S rRNA of the pre-60S ribosomes. This Saccharomyces cerevisiae (strain ATCC 204508 / S288c) (Baker's yeast) protein is Ribosomal RNA-processing protein 12 (RRP12).